Consider the following 733-residue polypeptide: Ribosomal protein S6 kinase 2 alpha (733 aa).

The tract at residues 18–38 (EDPENGHGSPEEGGRHTSKDE) is disordered. In terms of domain architecture, Protein kinase 1 spans 62–321 (FVLLKVLGQG…AEEIKRQPFF (260 aa)). ATP contacts are provided by residues 68 to 76 (LGQGSFGKV) and Lys-94. The active-site Proton acceptor is Asp-187. At Ser-221 the chain carries Phosphoserine. The AGC-kinase C-terminal domain occupies 322–391 (STIDWNKLFR…VAPALVEEDA (70 aa)). Thr-359 bears the Phosphothreonine mark. Ser-363 carries the post-translational modification Phosphoserine. At Ser-380 the chain carries Phosphoserine; by autocatalysis. The Protein kinase 2 domain occupies 416–673 (YTVRETIGVG…AKQVLQHEWI (258 aa)). ATP contacts are provided by residues 422–430 (IGVGSYSVC) and Lys-445. The active-site Proton acceptor is the Asp-533. Position 571 is a phosphothreonine (Thr-571). Ser-730 is subject to Phosphoserine.

It belongs to the protein kinase superfamily. AGC Ser/Thr protein kinase family. S6 kinase subfamily. Mg(2+) is required as a cofactor. Post-translationally, autophosphorylated on Ser-380, as part of the activation process.

It carries out the reaction L-seryl-[protein] + ATP = O-phospho-L-seryl-[protein] + ADP + H(+). The enzyme catalyses L-threonyl-[protein] + ATP = O-phospho-L-threonyl-[protein] + ADP + H(+). With respect to regulation, activated by multiple phosphorylations on threonine and serine residues. In terms of biological role, serine/threonine kinase that may play a role in mediating the growth-factor and stress induced activation of transcription. The sequence is that of Ribosomal protein S6 kinase 2 alpha (rps6ka) from Xenopus laevis (African clawed frog).